The following is a 1083-amino-acid chain: UPF0182 protein BAD_0641 (1083 aa).

A disordered region spans residues 1 to 72 (MSFFDMFGPM…TSKPNRPRKP (72 aa)). The next 7 membrane-spanning stretches (helical) occupy residues 78-98 (IFIG…ALAQ), 125-145 (LWLA…TLAI), 178-198 (IAVV…NANW), 239-259 (SLLL…MGGI), 281-301 (IGIW…LGVF), 325-345 (VTFI…LWIM), and 372-392 (VAIA…PVLL). The tract at residues 976–1061 (DSGASAGDAE…SDAAMKKGDW (86 aa)) is disordered. Composition is skewed to basic and acidic residues over residues 991–1013 (TDDK…DGKQ) and 1050–1060 (KDSDAAMKKGD).

It belongs to the UPF0182 family.

The protein localises to the cell membrane. This is UPF0182 protein BAD_0641 from Bifidobacterium adolescentis (strain ATCC 15703 / DSM 20083 / NCTC 11814 / E194a).